Consider the following 322-residue polypeptide: uncharacterized protein (322 aa).

This is an uncharacterized protein from Aquifex aeolicus (strain VF5).